The following is a 179-amino-acid chain: ATP synthase subunit delta (179 aa).

It belongs to the ATPase delta chain family. In terms of assembly, F-type ATPases have 2 components, F(1) - the catalytic core - and F(0) - the membrane proton channel. F(1) has five subunits: alpha(3), beta(3), gamma(1), delta(1), epsilon(1). F(0) has three main subunits: a(1), b(2) and c(10-14). The alpha and beta chains form an alternating ring which encloses part of the gamma chain. F(1) is attached to F(0) by a central stalk formed by the gamma and epsilon chains, while a peripheral stalk is formed by the delta and b chains.

The protein localises to the cell membrane. F(1)F(0) ATP synthase produces ATP from ADP in the presence of a proton or sodium gradient. F-type ATPases consist of two structural domains, F(1) containing the extramembraneous catalytic core and F(0) containing the membrane proton channel, linked together by a central stalk and a peripheral stalk. During catalysis, ATP synthesis in the catalytic domain of F(1) is coupled via a rotary mechanism of the central stalk subunits to proton translocation. In terms of biological role, this protein is part of the stalk that links CF(0) to CF(1). It either transmits conformational changes from CF(0) to CF(1) or is implicated in proton conduction. The chain is ATP synthase subunit delta from Mycoplasmopsis pulmonis (strain UAB CTIP) (Mycoplasma pulmonis).